Consider the following 286-residue polypeptide: Shikimate dehydrogenase (NADP(+)) (286 aa).

Shikimate contacts are provided by residues 20-22 and S67; that span reads SLS. Catalysis depends on K71, which acts as the Proton acceptor. Shikimate contacts are provided by N92 and D107. NADP(+) is bound by residues 131-135 and A230; that span reads GGGGA. Y232 contacts shikimate. Residue G253 participates in NADP(+) binding.

The protein belongs to the shikimate dehydrogenase family. In terms of assembly, homodimer.

The catalysed reaction is shikimate + NADP(+) = 3-dehydroshikimate + NADPH + H(+). Its pathway is metabolic intermediate biosynthesis; chorismate biosynthesis; chorismate from D-erythrose 4-phosphate and phosphoenolpyruvate: step 4/7. In terms of biological role, involved in the biosynthesis of the chorismate, which leads to the biosynthesis of aromatic amino acids. Catalyzes the reversible NADPH linked reduction of 3-dehydroshikimate (DHSA) to yield shikimate (SA). In Lactococcus lactis subsp. cremoris (strain MG1363), this protein is Shikimate dehydrogenase (NADP(+)).